Here is an 86-residue protein sequence, read N- to C-terminus: Insulin (86 aa).

Disulfide bonds link Cys7–Cys72, Cys19–Cys85, and Cys71–Cys76. A propeptide spans 33-63 (ELEDPQVGQADPGVVPEAGRLQPLALEMTLQ) (c peptide).

Belongs to the insulin family. In terms of assembly, heterodimer of a B chain and an A chain linked by two disulfide bonds.

Its subcellular location is the secreted. Its function is as follows. Insulin decreases blood glucose concentration. It increases cell permeability to monosaccharides, amino acids and fatty acids. It accelerates glycolysis, the pentose phosphate cycle, and glycogen synthesis in liver. In Chinchilla chinchilla (Short-tailed chinchilla), this protein is Insulin (INS).